We begin with the raw amino-acid sequence, 148 residues long: UPF0260 protein ESA_01462 (148 aa).

It belongs to the UPF0260 family.

The sequence is that of UPF0260 protein ESA_01462 from Cronobacter sakazakii (strain ATCC BAA-894) (Enterobacter sakazakii).